The primary structure comprises 491 residues: MYIVQIASECAPVIKAGGLGDVIYGLSRELELRGHCVELILPMYDCMRYDHIWGLHDAYRNLEVPWYGSSIFCDVFCGWVHGRLCFFIQPKSSDNFFNRGHYYGALDDHMRFAFFSKAAMEFLLRSNKRPDIIHCHDWQTGLVPVLLYEIYRFHGMDHQRVCYTIHNFKHQGIAGANILHATGLNNDSYYFSYDRLQDNFNPNAINFMKGGIVYSNYVNTVSPHHAWEARFSDISCGLGHTLEIHQQKFGGILNGLDYEVWNPEIDPLLASNFSVKTFGDKAKNKQALRERLLLETDDKKPMLCFIGRLDGQKGVHLVHHSIYYALSQGAQFVLLGSATEPNLSKWFWHEKQHLNDNPNVHLELGFDEELAHLIYGAADIIVVPSNYEPCGLTQMIGLRYGAVPVVRGVGGLVNTVFDRDYDQNHPPEKRNGFVFYQPDEYALETALSRAIALYKDDPVAFKTLALQGMAYDYSWNKPGLQYVEAYEYIRA.

ADP-alpha-D-glucose is bound at residue lysine 15.

Belongs to the glycosyltransferase 1 family. Bacterial/plant glycogen synthase subfamily.

It carries out the reaction [(1-&gt;4)-alpha-D-glucosyl](n) + ADP-alpha-D-glucose = [(1-&gt;4)-alpha-D-glucosyl](n+1) + ADP + H(+). The protein operates within glycan biosynthesis; glycogen biosynthesis. Its function is as follows. Synthesizes alpha-1,4-glucan chains using ADP-glucose. The sequence is that of Probable glycogen synthase 2 (glgA2) from Synechocystis sp. (strain ATCC 27184 / PCC 6803 / Kazusa).